A 157-amino-acid polypeptide reads, in one-letter code: S-ribosylhomocysteine lyase (157 aa).

3 residues coordinate Fe cation: His-54, His-58, and Cys-126.

This sequence belongs to the LuxS family. As to quaternary structure, homodimer. Requires Fe cation as cofactor.

It carries out the reaction S-(5-deoxy-D-ribos-5-yl)-L-homocysteine = (S)-4,5-dihydroxypentane-2,3-dione + L-homocysteine. Its function is as follows. Involved in the synthesis of autoinducer 2 (AI-2) which is secreted by bacteria and is used to communicate both the cell density and the metabolic potential of the environment. The regulation of gene expression in response to changes in cell density is called quorum sensing. Catalyzes the transformation of S-ribosylhomocysteine (RHC) to homocysteine (HC) and 4,5-dihydroxy-2,3-pentadione (DPD). This chain is S-ribosylhomocysteine lyase, found in Bacillus anthracis (strain A0248).